Reading from the N-terminus, the 376-residue chain is Glutamate 5-kinase (376 aa).

K15 contributes to the ATP binding site. Residues S56, D143, and N155 each contribute to the substrate site. Position 175–176 (175–176 (SD)) interacts with ATP. The PUA domain occupies 281–358 (KGTLTIDAGA…PDVMMILGIT (78 aa)).

Belongs to the glutamate 5-kinase family.

Its subcellular location is the cytoplasm. It carries out the reaction L-glutamate + ATP = L-glutamyl 5-phosphate + ADP. The protein operates within amino-acid biosynthesis; L-proline biosynthesis; L-glutamate 5-semialdehyde from L-glutamate: step 1/2. In terms of biological role, catalyzes the transfer of a phosphate group to glutamate to form L-glutamate 5-phosphate. The protein is Glutamate 5-kinase of Rhodopseudomonas palustris (strain ATCC BAA-98 / CGA009).